The chain runs to 288 residues: Probable prolyl 4-hydroxylase 6 (288 aa).

Over 1-4 the chain is Cytoplasmic; that stretch reads MDSQ. Residues 5-27 traverse the membrane as a helical; Signal-anchor for type II membrane protein segment; sequence YFLAFSLSLLLIFSQISSFSFSV. Over 28–288 the chain is Lumenal; sequence DPTRITQLSW…GFCRKSCKAC (261 aa). The Fe2OG dioxygenase domain maps to 116–238; sequence NGEALQILHY…KWSATRWIHV (123 aa). Fe cation is bound by residues His-134 and Asp-136. N-linked (GlcNAc...) asparagine glycosylation is found at Asn-160 and Asn-210. His-219 contacts Fe cation. Residue Lys-229 coordinates 2-oxoglutarate. In terms of domain architecture, ShKT spans 248-288; that stretch reads CVDDHESCQEWADAGECEKNPMYMVGSETSLGFCRKSCKAC. 3 disulfide bridges follow: Cys-248–Cys-288, Cys-255–Cys-281, and Cys-264–Cys-285.

This sequence belongs to the P4HA family. The cofactor is Fe(2+). L-ascorbate is required as a cofactor.

The protein localises to the endoplasmic reticulum membrane. The enzyme catalyses L-prolyl-[collagen] + 2-oxoglutarate + O2 = trans-4-hydroxy-L-prolyl-[collagen] + succinate + CO2. Catalyzes the post-translational formation of 4-hydroxyproline in -Xaa-Pro-Gly- sequences in proline-rich peptide sequences of plant glycoproteins and other proteins. Hydroxyprolines are important constituent of many plant cell wall glycoproteins such as extensins, hydroxyproline-rich glycoproteins, lectins and arabinogalactan proteins. This is Probable prolyl 4-hydroxylase 6 from Arabidopsis thaliana (Mouse-ear cress).